The following is a 24-amino-acid chain: Retinol-binding protein 3 (24 aa).

It is found in the secreted. Its subcellular location is the extracellular space. The protein resides in the extracellular matrix. The protein localises to the interphotoreceptor matrix. Functionally, IRBP shuttles 11-cis and all trans retinoids between the retinol isomerase in the pigment epithelium and the visual pigments in the photoreceptor cells of the retina. The sequence is that of Retinol-binding protein 3 (RBP3) from Ovis aries (Sheep).